Consider the following 323-residue polypeptide: Methionyl-tRNA formyltransferase (323 aa).

A (6S)-5,6,7,8-tetrahydrofolate-binding site is contributed by 115–118 (SLLP).

The protein belongs to the Fmt family.

The enzyme catalyses L-methionyl-tRNA(fMet) + (6R)-10-formyltetrahydrofolate = N-formyl-L-methionyl-tRNA(fMet) + (6S)-5,6,7,8-tetrahydrofolate + H(+). Attaches a formyl group to the free amino group of methionyl-tRNA(fMet). The formyl group appears to play a dual role in the initiator identity of N-formylmethionyl-tRNA by promoting its recognition by IF2 and preventing the misappropriation of this tRNA by the elongation apparatus. This is Methionyl-tRNA formyltransferase from Lactococcus lactis subsp. cremoris (strain SK11).